Reading from the N-terminus, the 417-residue chain is Phosphoglycerate kinase 1 (417 aa).

The residue at position 2 (Ser2) is an N-acetylserine. Ser2 and Ser4 each carry phosphoserine. Lys6 carries the N6-succinyllysine modification. Position 11 is an N6-acetyllysine (Lys11). Val23, Asp24, Phe25, Asn26, Gln38, and Arg39 together coordinate (2R)-3-phosphoglycerate. Positions Gln38–Ala43 are mitochondrial targeting region exposed following cis-trans isomerization by PIN1 and recognized by the TOM complex for mitochondrial translocation of the protein. Lys48 is subject to N6-acetyllysine; alternate. N6-succinyllysine; alternate is present on Lys48. Residues Ser62, His63, Gly65, and Arg66 each coordinate (2R)-3-phosphoglycerate. N6-acetyllysine is present on Lys75. A Phosphotyrosine modification is found at Tyr76. N6-acetyllysine is present on residues Lys86 and Lys91. An N6-acetyllysine; alternate modification is found at Lys97. Lys97 carries the post-translational modification N6-(2-hydroxyisobutyryl)lysine; alternate. Residues Leu122 and Arg123 each contribute to the (2R)-3-phosphoglycerate site. An N6-acetyllysine; alternate modification is found at Lys131. At Lys131 the chain carries N6-malonyllysine; alternate. Lys146 carries the N6-acetyllysine modification. Residues His170 and Arg171 each coordinate (2R)-3-phosphoglycerate. Lys191 carries the N6-succinyllysine modification. A Phosphotyrosine modification is found at Tyr196. An N6-acetyllysine modification is found at Lys199. Residue Ser203 is modified to Phosphoserine. Position 214 (Gly214) interacts with ADP. Gly214 contacts CDP. Residues Ala215 and Lys216 each coordinate AMP. Residue Ala215 participates in ATP binding. Ala215 serves as a coordination point for Mg(2+). Lys216 is subject to N6-(2-hydroxyisobutyryl)lysine. Residues Ala218 and Asp219 each coordinate Mg(2+). Residue Asp219 coordinates CDP. Lys220 is an AMP binding site. Lys220 contributes to the ATP binding site. Lys220 carries the N6-(2-hydroxyisobutyryl)lysine modification. Position 238 (Gly238) interacts with ADP. Residue Gly238 coordinates CDP. Gly239 contributes to the AMP binding site. Gly239 is an ATP binding site. N6-acetyllysine is present on residues Lys267 and Lys291. Gly313 contacts AMP. Gly313 is a binding site for ATP. An N6-(2-hydroxyisobutyryl)lysine modification is found at Lys323. CDP contacts are provided by Gly338, Val340, and Phe343. ADP is bound at residue Phe343. Glu344 lines the AMP pocket. Glu344 is an ATP binding site. Lys361 is modified (N6-acetyllysine). Positions 375 and 376 each coordinate ATP. Asp375 is a binding site for Mg(2+).

This sequence belongs to the phosphoglycerate kinase family. In terms of assembly, monomer. Interacts with kinase MAPK1/ERK2; the interaction is direct, occurs under hypoxic conditions, and promotes its interaction with PIN1. Interacts with peptidyl-prolyl cis-trans isomerase PIN1; the interaction is direct, occurs under hypoxic conditions, and targets the protein to the mitochondrion by promoting interactions with the TOM complex. Interacts with mitochondrial circRNA mcPGK1 (via its 2nd stem-loop); the interaction is direct and targets the protein to the mitochondrion by promoting interactions with the TOM complex. Interacts with pyruvate dehydrogenase kinase PDK1; the interaction is direct, occurs under hypoxic conditions and leads to PDK1-mediated inhibition of pyruvate dehydrogenase complex activity. The cofactor is Mg(2+). Phosphorylated at Ser-203 by MAPK1/ERK2 under hypoxic conditions, which promotes its mitochondrial targeting. Testis, lung, brain, skeletal muscle, liver, intestine, and kidney (at protein level).

The protein localises to the cytoplasm. It is found in the cytosol. It localises to the mitochondrion matrix. The catalysed reaction is (2R)-3-phosphoglycerate + ATP = (2R)-3-phospho-glyceroyl phosphate + ADP. The enzyme catalyses L-seryl-[protein] + ATP = O-phospho-L-seryl-[protein] + ADP + H(+). The protein operates within carbohydrate degradation; glycolysis; pyruvate from D-glyceraldehyde 3-phosphate: step 2/5. In terms of biological role, catalyzes one of the two ATP producing reactions in the glycolytic pathway via the reversible conversion of 1,3-diphosphoglycerate to 3-phosphoglycerate. Both L- and D- forms of purine and pyrimidine nucleotides can be used as substrates, but the activity is much lower on pyrimidines. In addition to its role as a glycolytic enzyme, it seems that PGK-1 acts as a polymerase alpha cofactor protein (primer recognition protein). Acts as a protein kinase when localized to the mitochondrion where it phosphorylates pyruvate dehydrogenase kinase PDK1 to inhibit pyruvate dehydrogenase complex activity and suppress the formation of acetyl-coenzyme A from pyruvate, and consequently inhibit oxidative phosphorylation and promote glycolysis. May play a role in sperm motility. This chain is Phosphoglycerate kinase 1 (Pgk1), found in Mus musculus (Mouse).